A 143-amino-acid chain; its full sequence is Lutropin subunit beta (143 aa).

A signal peptide spans 1-22; the sequence is MEMLQGLLLLWLLLLNVGGVWT. 6 cysteine pairs are disulfide-bonded: Cys-31–Cys-79, Cys-45–Cys-94, Cys-48–Cys-132, Cys-56–Cys-110, Cys-60–Cys-112, and Cys-115–Cys-122. An N-linked (GlcNAc...) asparagine glycan is attached at Asn-35.

It belongs to the glycoprotein hormones subunit beta family. In terms of assembly, heterodimer of a common alpha chain and a unique beta chain which confers biological specificity to thyrotropin, lutropin, follitropin and gonadotropin.

Its subcellular location is the secreted. Its function is as follows. Promotes spermatogenesis and ovulation by stimulating the testes and ovaries to synthesize steroids. The protein is Lutropin subunit beta (LHB) of Felis catus (Cat).